The sequence spans 516 residues: H/ACA ribonucleoprotein complex subunit DKC1 (516 aa).

Residues M1–D24 form a disordered region. Catalysis depends on D123, which acts as the Nucleophile. One can recognise a PUA domain in the interval H294–M369. Residues K422–E516 are disordered. Positions E434–E446 are enriched in basic and acidic residues. The segment covering S453–E464 has biased composition (pro residues). A coiled-coil region spans residues P463 to E516. The segment covering K469–K478 has biased composition (basic residues).

It belongs to the pseudouridine synthase TruB family. Part of the H/ACA small nucleolar ribonucleoprotein (H/ACA snoRNP) complex, which contains NHP2/NOLA2, GAR1/NOLA1, NOP10/NOLA3, and DKC1/NOLA4, which is presumed to be the catalytic subunit. The complex contains a stable core formed by binding of one or two NOP10-DKC1 heterodimers to NHP2; GAR1 subsequently binds to this core via DKC1. The complex binds a box H/ACA small nucleolar RNA (snoRNA), which may target the specific site of modification within the RNA substrate.

It localises to the nucleus. The protein resides in the nucleolus. Its subcellular location is the cajal body. It carries out the reaction uridine in 5S rRNA = pseudouridine in 5S rRNA. Catalytic subunit of H/ACA small nucleolar ribonucleoprotein (H/ACA snoRNP) complex, which catalyzes pseudouridylation of rRNA. This involves the isomerization of uridine such that the ribose is subsequently attached to C5, instead of the normal N1. Each rRNA can contain up to 100 pseudouridine ('psi') residues, which may serve to stabilize the conformation of rRNAs. Required for ribosome biogenesis and telomere maintenance. The sequence is that of H/ACA ribonucleoprotein complex subunit DKC1 (DKC1) from Gallus gallus (Chicken).